Reading from the N-terminus, the 343-residue chain is Phosphoribosylformylglycinamidine cyclo-ligase (343 aa).

This sequence belongs to the AIR synthase family.

It localises to the cytoplasm. The catalysed reaction is 2-formamido-N(1)-(5-O-phospho-beta-D-ribosyl)acetamidine + ATP = 5-amino-1-(5-phospho-beta-D-ribosyl)imidazole + ADP + phosphate + H(+). Its pathway is purine metabolism; IMP biosynthesis via de novo pathway; 5-amino-1-(5-phospho-D-ribosyl)imidazole from N(2)-formyl-N(1)-(5-phospho-D-ribosyl)glycinamide: step 2/2. The polypeptide is Phosphoribosylformylglycinamidine cyclo-ligase (Parasynechococcus marenigrum (strain WH8102)).